The following is a 308-amino-acid chain: Probable manganese-dependent inorganic pyrophosphatase (308 aa).

The Mn(2+) site is built by His-9, Asp-13, Asp-15, Asp-75, His-97, and Asp-149.

Belongs to the PPase class C family. Mn(2+) serves as cofactor.

It is found in the cytoplasm. It carries out the reaction diphosphate + H2O = 2 phosphate + H(+). The sequence is that of Probable manganese-dependent inorganic pyrophosphatase from Bacillus pumilus (strain SAFR-032).